A 419-amino-acid polypeptide reads, in one-letter code: MAEDLINSFMNGPDENGRFGIFGGRFVSETLMPLILSLEEEYEKAKVDPDFWAEMDDLWKNYVGRPSPLYFAERLTNHLGGAKVYMKRDELNHTGAHKVNNVLGQILLARRMGKTRIIAETGAGQHGVATATVCAKFGLKCVVYMGAHDVRRQAPNVFRMRLLGAEVIPVTSGRGTLKDAMNDALRDWVTNVRDTFYCIGTVAGPHPYPAMVRDFQSVIGKEVRWQLAEQEGEGRLPDTVIAAIGGGSNAMGLFHPFLDDPSVNIIGVEAGGKGVDEKMEHCASLTGGRPGVLHGNRTYLLQDDDGQILEGFSISAGLDYPGIGPEHAWLHETGRAQYVSITDKEALEAFQLSCAMEGIIPALEPSHALAHVTKIAPELPKDHIIVMNMCGRGDKDIFTVARHLGFDMSDTEEGRDLEE.

K98 bears the N6-(pyridoxal phosphate)lysine mark.

This sequence belongs to the TrpB family. As to quaternary structure, tetramer of two alpha and two beta chains. Pyridoxal 5'-phosphate is required as a cofactor.

It catalyses the reaction (1S,2R)-1-C-(indol-3-yl)glycerol 3-phosphate + L-serine = D-glyceraldehyde 3-phosphate + L-tryptophan + H2O. It functions in the pathway amino-acid biosynthesis; L-tryptophan biosynthesis; L-tryptophan from chorismate: step 5/5. In terms of biological role, the beta subunit is responsible for the synthesis of L-tryptophan from indole and L-serine. This chain is Tryptophan synthase beta chain, found in Ruegeria sp. (strain TM1040) (Silicibacter sp.).